The sequence spans 243 residues: NAD-dependent protein deacylase (243 aa).

The Deacetylase sirtuin-type domain maps to 1 to 234; the sequence is MYQHIVVLTG…PKLVDTILAG (234 aa). Residue 10–29 participates in NAD(+) binding; it reads GAGISAESGLRTFRDQDGLW. 2 residues coordinate substrate: tyrosine 54 and arginine 57. 91–94 provides a ligand contact to NAD(+); the sequence is QNID. The Proton acceptor role is filled by histidine 109. Zn(2+) contacts are provided by cysteine 117 and cysteine 136. NAD(+) contacts are provided by residues 176-178, 202-204, and alanine 220; these read GTS and NLQ.

The protein belongs to the sirtuin family. Class III subfamily. Zn(2+) is required as a cofactor.

It is found in the cytoplasm. It carries out the reaction N(6)-acetyl-L-lysyl-[protein] + NAD(+) + H2O = 2''-O-acetyl-ADP-D-ribose + nicotinamide + L-lysyl-[protein]. It catalyses the reaction N(6)-succinyl-L-lysyl-[protein] + NAD(+) + H2O = 2''-O-succinyl-ADP-D-ribose + nicotinamide + L-lysyl-[protein]. NAD-dependent lysine deacetylase and desuccinylase that specifically removes acetyl and succinyl groups on target proteins. Modulates the activities of several proteins which are inactive in their acylated form. This Shewanella oneidensis (strain ATCC 700550 / JCM 31522 / CIP 106686 / LMG 19005 / NCIMB 14063 / MR-1) protein is NAD-dependent protein deacylase.